The following is a 138-amino-acid chain: Large-conductance mechanosensitive channel (138 aa).

2 consecutive transmembrane segments (helical) span residues 10 to 30 and 76 to 96; these read FAMRGNVVDLAVGVIIGAAFG and GSFIQTIFDFVIVAFAIFLAI.

Belongs to the MscL family. As to quaternary structure, homopentamer.

The protein resides in the cell inner membrane. Channel that opens in response to stretch forces in the membrane lipid bilayer. May participate in the regulation of osmotic pressure changes within the cell. The polypeptide is Large-conductance mechanosensitive channel (Serratia proteamaculans (strain 568)).